A 420-amino-acid chain; its full sequence is Tyrosine--tRNA ligase 1 (420 aa).

Tyr-35 is a binding site for L-tyrosine. The 'HIGH' region signature appears at 40–49; the sequence is PTAGSLHIGH. L-tyrosine is bound by residues Tyr-172 and Gln-176. The short motif at 232–236 is the 'KMSKS' region element; that stretch reads KFGKT. Lys-235 contributes to the ATP binding site. The S4 RNA-binding domain maps to 355-419; that stretch reads INIAELLVKS…GKKQFRLIKL (65 aa).

The protein belongs to the class-I aminoacyl-tRNA synthetase family. TyrS type 1 subfamily. Homodimer.

The protein resides in the cytoplasm. It catalyses the reaction tRNA(Tyr) + L-tyrosine + ATP = L-tyrosyl-tRNA(Tyr) + AMP + diphosphate + H(+). Functionally, catalyzes the attachment of tyrosine to tRNA(Tyr) in a two-step reaction: tyrosine is first activated by ATP to form Tyr-AMP and then transferred to the acceptor end of tRNA(Tyr). The protein is Tyrosine--tRNA ligase 1 of Pseudoalteromonas translucida (strain TAC 125).